Reading from the N-terminus, the 33-residue chain is Defensin-1 (33 aa).

3 disulfide bridges follow: Cys-4–Cys-32, Cys-6–Cys-21, and Cys-11–Cys-31.

The protein belongs to the alpha-defensin family.

The protein resides in the secreted. Functionally, has antibacterial activity against the Gram-negative bacterium E.coli and the Gram-positive bacteria L.monocytogenes and S.aureus. Has antifungal activity against C.albicans. This is Defensin-1 from Papio hamadryas (Hamadryas baboon).